Reading from the N-terminus, the 196-residue chain is MTDEQVLAEFRAAEALLEGHFILSSGLRSSRYLQCARVLMNPARAARLAEALAFKIPDKLKIQLGSVVSPAMGGVIAGHEMGRALGLDAMFVERPDGVFHLRRGFRLEPGQKVLLMEDVVTTGLSSREAIKAVEEAGGQVIAAAALVDRSNGTADLGVPFYPLIRLDVPTYQPESLPPELAAIPAVKPGSRAAVAA.

Residue 117 to 125 coordinates 5-phospho-alpha-D-ribose 1-diphosphate; it reads EDVVTTGLS. Orotate is bound by residues Thr121 and Arg149.

It belongs to the purine/pyrimidine phosphoribosyltransferase family. PyrE subfamily. In terms of assembly, homodimer. Mg(2+) serves as cofactor.

The catalysed reaction is orotidine 5'-phosphate + diphosphate = orotate + 5-phospho-alpha-D-ribose 1-diphosphate. The protein operates within pyrimidine metabolism; UMP biosynthesis via de novo pathway; UMP from orotate: step 1/2. Catalyzes the transfer of a ribosyl phosphate group from 5-phosphoribose 1-diphosphate to orotate, leading to the formation of orotidine monophosphate (OMP). In Rhizorhabdus wittichii (strain DSM 6014 / CCUG 31198 / JCM 15750 / NBRC 105917 / EY 4224 / RW1) (Sphingomonas wittichii), this protein is Orotate phosphoribosyltransferase.